Reading from the N-terminus, the 656-residue chain is Acyl-CoA-binding domain-containing protein 6 (656 aa).

Positions 8-102 constitute an ACB domain; the sequence is YPDRFYAAAA…LEEEDPGWYS (95 aa). Residues 44-48 and lysine 70 each bind an acyl-CoA; that span reads YGLYQ. A disordered region spans residues 129 to 148; it reads ASTNGTSVPEPKTISENGSS. Kelch repeat units lie at residues 194-241, 254-304, 305-354, 356-405, 406-454, and 461-507; these read KMYI…AQVS, KFFS…LVGT, TLVL…CHAD, YLLI…TVGE, NWYI…LVHS, and YLIS…EPEV. The stretch at 527–636 forms a coiled coil; the sequence is LKKDDANELL…EQAALEAKQR (110 aa). The disordered stretch occupies residues 627–656; the sequence is EQAALEAKQRQSSSGMWGWLVGTPPDKSES.

Belongs to the ACBP family. As to expression, highly expressed in leaves. Expressed in roots and seeds.

The protein localises to the peroxisome. Functionally, binds medium- and long-chain acyl-CoA esters with high affinity. Can interact in vitro with linoleoyl-CoA and linolenoyl-CoA. Binds phosphatidic acid (PA) and phosphatidylcholine (PC) in vitro. May play a role in the biosynthesis of phospholipids. May be involved in lipid degradation via peroxisomal beta-oxydation. The polypeptide is Acyl-CoA-binding domain-containing protein 6 (Oryza sativa subsp. japonica (Rice)).